The sequence spans 146 residues: Anti-sigma F factor (146 aa).

Belongs to the anti-sigma-factor family.

The catalysed reaction is L-seryl-[protein] + ATP = O-phospho-L-seryl-[protein] + ADP + H(+). It carries out the reaction L-threonyl-[protein] + ATP = O-phospho-L-threonyl-[protein] + ADP + H(+). Functionally, binds to sigma F and blocks its ability to form an RNA polymerase holoenzyme (E-sigma F). Phosphorylates SpoIIAA on a serine residue. This phosphorylation may enable SpoIIAA to act as an anti-anti-sigma factor that counteracts SpoIIAB and thus releases sigma F from inhibition. This Anoxybacillus flavithermus (strain DSM 21510 / WK1) protein is Anti-sigma F factor.